A 403-amino-acid chain; its full sequence is MSQVKIGQFKFGQDTFTLRYVLGGEQQVKFVAKDIASNLKHANCAEAVRKHVDGKYKSTFEHGEIRSHLASNALAKQGDPLYLHPHTVLVTKEGVIQLIMKSKLPYAVELQAWLLEEVIPQVLCTGKYDPAIKHQQEETKRMTDRLIKVFTDHTTTLHAALVKKEKFVEFVVESNNKQIEAKNKLIEAKDQHVTRVMTDLNRMYSSFQDTMQRKDDIMKRKDEIIQKKDEQFQETMQKKDEQFKETIQKKDEQFKETIQKKDEQFQEIIQKKDAQLQETIQRKDEQIARLIDAAMDLSSRAVQYPADERKHPVLCVARDGTTFHGIAGQRRYVQSQKRKLGVKDDDLVLETRRPNPALDWTNATHTTSAVKRSKRSITFDSPEEAQLFEDTIKYLLSVDSVHK.

Residues 3–126 (QVKIGQFKFG…EVIPQVLCTG (124 aa)) enclose the Bro-N domain.

This is an uncharacterized protein from Lepidoptera (butterflies and moths).